Here is a 206-residue protein sequence, read N- to C-terminus: Probable 5-formyltetrahydrofolate cyclo-ligase (206 aa).

Residues 8 to 12 (KSELR) and Arg12 each bind ATP. Substrate is bound by residues Val54, Glu59, and 146 to 150 (HGKGY). 143–151 (RCGHGKGYY) serves as a coordination point for ATP. Positions 152 and 188 each coordinate Mg(2+).

It belongs to the 5-formyltetrahydrofolate cyclo-ligase family. In terms of assembly, monomer. Requires Mg(2+) as cofactor.

The protein resides in the cytoplasm. It carries out the reaction (6S)-5-formyl-5,6,7,8-tetrahydrofolate + ATP = (6R)-5,10-methenyltetrahydrofolate + ADP + phosphate. Contributes to tetrahydrofolate metabolism. Helps regulate carbon flow through the folate-dependent one-carbon metabolic network that supplies carbon for the biosynthesis of purines, thymidine and amino acids. Catalyzes the irreversible conversion of 5-formyltetrahydrofolate (5-CHO-H(4)PteGlu) to yield 5,10-methenyltetrahydrofolate. This chain is Probable 5-formyltetrahydrofolate cyclo-ligase, found in Caenorhabditis elegans.